The chain runs to 101 residues: Urease subunit beta (101 aa).

Belongs to the urease beta subunit family. As to quaternary structure, heterotrimer of UreA (gamma), UreB (beta) and UreC (alpha) subunits. Three heterotrimers associate to form the active enzyme.

The protein resides in the cytoplasm. It carries out the reaction urea + 2 H2O + H(+) = hydrogencarbonate + 2 NH4(+). It functions in the pathway nitrogen metabolism; urea degradation; CO(2) and NH(3) from urea (urease route): step 1/1. The protein is Urease subunit beta of Dechloromonas aromatica (strain RCB).